The following is a 25-amino-acid chain: Antimicrobial peptide scolopin-2 (25 aa).

As to expression, expressed by the venom gland.

The protein resides in the secreted. Its function is as follows. Antimicrobial peptide against both Gram-positive, -negative and yeast. Also induces histamine release by mast cells and shows moderate hemolytic activities against both human and rabbit red cells. The protein is Antimicrobial peptide scolopin-2 of Scolopendra mutilans (Chinese red-headed centipede).